The primary structure comprises 217 residues: Uracil-DNA glycosylase (217 aa).

The active-site Proton acceptor is the D62.

This sequence belongs to the uracil-DNA glycosylase (UDG) superfamily. UNG family.

The protein localises to the cytoplasm. The catalysed reaction is Hydrolyzes single-stranded DNA or mismatched double-stranded DNA and polynucleotides, releasing free uracil.. Excises uracil residues from the DNA which can arise as a result of misincorporation of dUMP residues by DNA polymerase or due to deamination of cytosine. The protein is Uracil-DNA glycosylase of Streptococcus thermophilus (strain ATCC BAA-491 / LMD-9).